The chain runs to 259 residues: Acyl-[acyl-carrier-protein]--UDP-N-acetylglucosamine O-acyltransferase (259 aa).

This sequence belongs to the transferase hexapeptide repeat family. LpxA subfamily. Homotrimer.

It is found in the cytoplasm. The enzyme catalyses a (3R)-hydroxyacyl-[ACP] + UDP-N-acetyl-alpha-D-glucosamine = a UDP-3-O-[(3R)-3-hydroxyacyl]-N-acetyl-alpha-D-glucosamine + holo-[ACP]. It functions in the pathway glycolipid biosynthesis; lipid IV(A) biosynthesis; lipid IV(A) from (3R)-3-hydroxytetradecanoyl-[acyl-carrier-protein] and UDP-N-acetyl-alpha-D-glucosamine: step 1/6. Functionally, involved in the biosynthesis of lipid A, a phosphorylated glycolipid that anchors the lipopolysaccharide to the outer membrane of the cell. The protein is Acyl-[acyl-carrier-protein]--UDP-N-acetylglucosamine O-acyltransferase of Psychrobacter arcticus (strain DSM 17307 / VKM B-2377 / 273-4).